Reading from the N-terminus, the 101-residue chain is Small ribosomal subunit protein uS14 (101 aa).

This sequence belongs to the universal ribosomal protein uS14 family. Part of the 30S ribosomal subunit. Contacts proteins S3 and S10.

Functionally, binds 16S rRNA, required for the assembly of 30S particles and may also be responsible for determining the conformation of the 16S rRNA at the A site. The chain is Small ribosomal subunit protein uS14 from Roseobacter denitrificans (strain ATCC 33942 / OCh 114) (Erythrobacter sp. (strain OCh 114)).